A 454-amino-acid chain; its full sequence is Glutamyl-tRNA reductase (454 aa).

Residues 50-53 (TCNR), Ser-103, 108-110 (EDQ), and Gln-114 each bind substrate. Catalysis depends on Cys-51, which acts as the Nucleophile. 182 to 187 (GAGEMG) contributes to the NADP(+) binding site. The tract at residues 407 to 454 (LFDPNFGGDTPQPDRPDDIPRAAERGDISGDDLPDDVPNHIAEKVSDG) is disordered. Basic and acidic residues-rich tracts occupy residues 418–434 (QPDR…RGDI) and 443–454 (VPNHIAEKVSDG).

Belongs to the glutamyl-tRNA reductase family. In terms of assembly, homodimer.

The enzyme catalyses (S)-4-amino-5-oxopentanoate + tRNA(Glu) + NADP(+) = L-glutamyl-tRNA(Glu) + NADPH + H(+). The protein operates within porphyrin-containing compound metabolism; protoporphyrin-IX biosynthesis; 5-aminolevulinate from L-glutamyl-tRNA(Glu): step 1/2. Catalyzes the NADPH-dependent reduction of glutamyl-tRNA(Glu) to glutamate 1-semialdehyde (GSA). The polypeptide is Glutamyl-tRNA reductase (Haloquadratum walsbyi (strain DSM 16790 / HBSQ001)).